The following is a 482-amino-acid chain: uncharacterized protein (482 aa).

2 WD repeats span residues 92–133 and 191–230; these read DMPN…REPI and GHEHNIPCITFNSSGTLLLSGSIDRSLQIWDITSLSCLCK.

It localises to the cytoplasm. The protein localises to the nucleus. This is an uncharacterized protein from Schizosaccharomyces pombe (strain 972 / ATCC 24843) (Fission yeast).